A 190-amino-acid polypeptide reads, in one-letter code: dCTP deaminase, dUMP-forming (190 aa).

DCTP is bound by residues 101 to 106 (KSSLGR), Asp-119, 127 to 129 (TLE), Gln-148, Tyr-162, and Gln-174. The active-site Proton donor/acceptor is the Glu-129. The disordered stretch occupies residues 162 to 190 (YGSASAGSKYQGQRGPTPSRSYENFIKNT). The span at 166 to 190 (SAGSKYQGQRGPTPSRSYENFIKNT) shows a compositional bias: polar residues.

It belongs to the dCTP deaminase family. In terms of assembly, homotrimer.

It catalyses the reaction dCTP + 2 H2O = dUMP + NH4(+) + diphosphate. It functions in the pathway pyrimidine metabolism; dUMP biosynthesis; dUMP from dCTP: step 1/1. Functionally, bifunctional enzyme that catalyzes both the deamination of dCTP to dUTP and the hydrolysis of dUTP to dUMP without releasing the toxic dUTP intermediate. The polypeptide is dCTP deaminase, dUMP-forming (Mycobacterium leprae (strain Br4923)).